We begin with the raw amino-acid sequence, 462 residues long: 3-isopropylmalate dehydratase large subunit (462 aa).

[4Fe-4S] cluster-binding residues include cysteine 337, cysteine 397, and cysteine 400.

This sequence belongs to the aconitase/IPM isomerase family. LeuC type 1 subfamily. Heterodimer of LeuC and LeuD. The cofactor is [4Fe-4S] cluster.

The catalysed reaction is (2R,3S)-3-isopropylmalate = (2S)-2-isopropylmalate. It functions in the pathway amino-acid biosynthesis; L-leucine biosynthesis; L-leucine from 3-methyl-2-oxobutanoate: step 2/4. Functionally, catalyzes the isomerization between 2-isopropylmalate and 3-isopropylmalate, via the formation of 2-isopropylmaleate. The polypeptide is 3-isopropylmalate dehydratase large subunit (Listeria monocytogenes serovar 1/2a (strain ATCC BAA-679 / EGD-e)).